The chain runs to 187 residues: UPF0398 protein MW1336 (187 aa).

The protein belongs to the UPF0398 family.

The sequence is that of UPF0398 protein MW1336 from Staphylococcus aureus (strain MW2).